The primary structure comprises 923 residues: Transportin-3 (923 aa).

M1 bears the N-acetylmethionine mark. S74 is modified (phosphoserine). T896 carries the post-translational modification Phosphothreonine.

In terms of assembly, interacts with (GTP-bound) Ran. Interacts with (phosphorylated) SFRS1 and SFRS2; leading to their nuclear import. Interacts with NUP62. Interacts with RBM4. Interacts with CPSF6, promoting its nuclear import. As to quaternary structure, (Microbial infection) Interacts with the HIV-1 pre-integration complex (PIC), which is composed of viral genome, matrix protein, Vpr and integrase. Interacts with HIV-1 integrase protein; the interaction is direct. In terms of tissue distribution, expressed in skeletal muscle.

The protein resides in the nucleus envelope. It localises to the cytoplasm. Functionally, importin, which transports target proteins into the nucleus. Specifically mediates the nuclear import of splicing factor serine/arginine (SR) proteins, such as RBM4, SFRS1 and SFRS2, by recognizing phosphorylated SR domains. Also mediates the nuclear import of serine/arginine (SR) protein CPSF6, independently of CPSF6 phosphorylation. The nuclear import process is regulated by the small GTPase Ran that partitions between cytoplasm and nucleus in the predominantly GDP- and GTP-bound form, respectively. Importin associates with target cargo proteins in the cytoplasm, and the competitive binding of GTP-bound Ran induces the release of cargos in the nucleus. In terms of biological role, (Microbial infection) Involved in immunodeficiency virus (HIV-1) infection by importing the pre-integration complex (PIC) into the nucleus. Required for a nuclear maturation step of HIV-1 prior to integration. This is Transportin-3 from Homo sapiens (Human).